The primary structure comprises 518 residues: Retinal dehydrogenase 2 (518 aa).

Y168 bears the Phosphotyrosine mark. Residues I184 to W186, K210 to E213, and S264 to E266 contribute to the NAD(+) site. The active-site Proton acceptor is E286. The active-site Nucleophile is C320. S351 bears the Phosphoserine mark. NAD(+) is bound by residues K366–K370 and E417.

The protein belongs to the aldehyde dehydrogenase family. In terms of assembly, homotetramer.

It is found in the cytoplasm. The catalysed reaction is retinal + NAD(+) + H2O = retinoate + NADH + 2 H(+). It carries out the reaction all-trans-retinal + NAD(+) + H2O = all-trans-retinoate + NADH + 2 H(+). It catalyses the reaction all-trans-13,14-dihydroretinal + NAD(+) + H2O = all-trans-13,14-dihydroretinoate + NADH + 2 H(+). It participates in cofactor metabolism; retinol metabolism. Catalyzes the NAD-dependent oxidation of aldehyde substrates, such as all-trans-retinal and all-trans-13,14-dihydroretinal, to their corresponding carboxylic acids, all-trans-retinoate and all-trans-13,14-dihydroretinoate, respectively. Retinoate signaling is critical for the transcriptional control of many genes, for instance it is crucial for initiation of meiosis in both male and female. Recognizes retinal as substrate, both in its free form and when bound to cellular retinol-binding protein. Lacks activity with benzaldehyde, acetaldehyde and octanal. Displays complete lack of activity with citral. The sequence is that of Retinal dehydrogenase 2 (Aldh1a2) from Mus musculus (Mouse).